The primary structure comprises 368 residues: Flavanone 3-dioxygenase (368 aa).

A Fe2OG dioxygenase domain is found at C191–P295. Fe cation contacts are provided by H218, D220, and H276. R286 provides a ligand contact to 2-oxoglutarate.

Belongs to the iron/ascorbate-dependent oxidoreductase family. Fe(2+) is required as a cofactor. L-ascorbate serves as cofactor.

It carries out the reaction a (2S)-flavan-4-one + 2-oxoglutarate + O2 = a (2R,3R)-dihydroflavonol + succinate + CO2. It functions in the pathway secondary metabolite biosynthesis; flavonoid biosynthesis. Functionally, involved in the conversion of (2S)-naringenin to (+)-(2R/3R)-dihydrokaempferol. This is Flavanone 3-dioxygenase (FHT) from Petroselinum crispum (Parsley).